The primary structure comprises 304 residues: L-lactate dehydrogenase (304 aa).

Residues valine 11, aspartate 32, arginine 37, and 76–77 (GA) each bind NAD(+). Substrate contacts are provided by residues glutamine 79, arginine 85, and 117–120 (NPVD). Residue serine 138 coordinates NAD(+). 143–146 (DSAR) contributes to the substrate binding site. Beta-D-fructose 1,6-bisphosphate contacts are provided by arginine 148 and histidine 163. The Proton acceptor role is filled by histidine 170. Threonine 225 contributes to the substrate binding site.

The protein belongs to the LDH/MDH superfamily. LDH family. As to quaternary structure, homotetramer.

The protein resides in the cytoplasm. The catalysed reaction is (S)-lactate + NAD(+) = pyruvate + NADH + H(+). It participates in fermentation; pyruvate fermentation to lactate; (S)-lactate from pyruvate: step 1/1. With respect to regulation, allosterically activated by fructose 1,6-bisphosphate (FBP). Functionally, catalyzes the conversion of lactate to pyruvate. This is L-lactate dehydrogenase from Deinococcus radiodurans (strain ATCC 13939 / DSM 20539 / JCM 16871 / CCUG 27074 / LMG 4051 / NBRC 15346 / NCIMB 9279 / VKM B-1422 / R1).